Consider the following 138-residue polypeptide: Membrane protein P8A7 (138 aa).

4 helical membrane-spanning segments follow: residues 12–30 (ILVI…YLFV), 32–56 (GLFH…IVLL), 71–90 (YTYW…LILG), and 93–118 (GFFL…LLGC).

It is found in the membrane. In Dictyostelium discoideum (Social amoeba), this protein is Membrane protein P8A7 (pmpA).